The primary structure comprises 1050 residues: DNA ligase 4 (1050 aa).

A disordered region spans residues 1–22 (MNTNRRSRSPDEEALEEDQHQY). ATP is bound by residues glutamate 329, lysine 331, leucine 332, arginine 336, glutamate 398, phenylalanine 438, glutamate 498, lysine 503, lysine 520, and lysine 522. The N6-AMP-lysine intermediate role is filled by lysine 331. Glutamate 398 is a Mg(2+) binding site. Glutamate 498 lines the Mg(2+) pocket. The span at 691-702 (QEQERKKMEMEN) shows a compositional bias: basic and acidic residues. A disordered region spans residues 691 to 711 (QEQERKKMEMENRKRKPATKR). BRCT domains follow at residues 742–840 (ASKR…KENK) and 936–1049 (LRSF…EYVA).

It belongs to the ATP-dependent DNA ligase family. It depends on Mg(2+) as a cofactor.

It localises to the nucleus. It catalyses the reaction ATP + (deoxyribonucleotide)n-3'-hydroxyl + 5'-phospho-(deoxyribonucleotide)m = (deoxyribonucleotide)n+m + AMP + diphosphate.. DNA ligase involved in DNA non-homologous end joining (NHEJ); required for double-strand break (DSB) repair. In Neurospora crassa (strain ATCC 24698 / 74-OR23-1A / CBS 708.71 / DSM 1257 / FGSC 987), this protein is DNA ligase 4 (mus-53).